We begin with the raw amino-acid sequence, 447 residues long: MELLKLNRSVQGTGPGPGASLCRPGAPLLNSSSVGNLSCEPPRIRGAGTRELELAIRITLYAVIFLMSVGGNMLIIVVLGLSRRLRTVTNAFLLSLAVSDLLLAVACMPFTLLPNLMGTFIFGTVICKAVSYLMGVSVSVSTLSLVAIALERYSAICRPLQARVWQTRSHAARVIVATWLLSGLLMVPYPVYTVVQPVGPRVLQCVHRWPSARVRQTWSVLLLLLLFFIPGVVMAVAYGLISRELYLGLRFDGDSDSDSQSRVRNQGGLPGAVHQNGRCRPETGAVGEDSDGCYVQLPRSRPALELTALTAPGPGSGSRPTQAKLLAKKRVVRMLLVIVVLFFLCWLPVYSANTWRAFDGPGAHRALSGAPISFIHLLSYASACVNPLVYCFMHRRFRQACLETCARCCPRPPRARPRALPDEDPPTPSIASLSRLSYTTISTLGPG.

The Extracellular segment spans residues 1 to 57 (MELLKLNRSVQGTGPGPGASLCRPGAPLLNSSSVGNLSCEPPRIRGAGTRELELAIR). Residues asparagine 7, asparagine 30, and asparagine 36 are each glycosylated (N-linked (GlcNAc...) asparagine). Residues 58–79 (ITLYAVIFLMSVGGNMLIIVVL) traverse the membrane as a helical segment. Over 80 to 87 (GLSRRLRT) the chain is Cytoplasmic. Residues 88-109 (VTNAFLLSLAVSDLLLAVACMP) traverse the membrane as a helical segment. At 110 to 131 (FTLLPNLMGTFIFGTVICKAVS) the chain is on the extracellular side. Cysteine 127 and cysteine 205 are disulfide-bonded. The helical transmembrane segment at 132 to 150 (YLMGVSVSVSTLSLVAIAL) threads the bilayer. Residues 151–170 (ERYSAICRPLQARVWQTRSH) are Cytoplasmic-facing. Residues 171–189 (AARVIVATWLLSGLLMVPY) traverse the membrane as a helical segment. Residues 190–219 (PVYTVVQPVGPRVLQCVHRWPSARVRQTWS) lie on the Extracellular side of the membrane. Residues 220 to 242 (VLLLLLLFFIPGVVMAVAYGLIS) traverse the membrane as a helical segment. The Cytoplasmic segment spans residues 243–333 (RELYLGLRFD…KLLAKKRVVR (91 aa)). The tract at residues 258 to 285 (DSQSRVRNQGGLPGAVHQNGRCRPETGA) is disordered. Residues 334-355 (MLLVIVVLFFLCWLPVYSANTW) traverse the membrane as a helical segment. Over 356–373 (RAFDGPGAHRALSGAPIS) the chain is Extracellular. The helical transmembrane segment at 374–394 (FIHLLSYASACVNPLVYCFMH) threads the bilayer. Topologically, residues 395–447 (RRFRQACLETCARCCPRPPRARPRALPDEDPPTPSIASLSRLSYTTISTLGPG) are cytoplasmic. Cysteine 408 carries the S-palmitoyl cysteine lipid modification.

The protein belongs to the G-protein coupled receptor 1 family. In terms of tissue distribution, isoform 1 is expressed in brain, pancreas, stomach, the colon cancer cell line LoVo and the T-lymphoblastoma Jurkat, but not in heart, placenta, liver, lung, skeletal muscle, kidney or the stomach cancer cell line AGS. Expressed at high levels in the small cell lung cancer cell line NCI-H510, at lower levels in NCI-H345, NCI-H69 and GLC-28 cell lines, not expressed in GLC-19 cell line. Within the stomach, expressed at high levels in the mucosa of the gastric fundus and at low levels in the antrum and duodenum. Isoform 2 is present in pancreatic cancer cells and colorectal cancer cells, but not in normal pancreas or colonic mucosa. Isoform 3 is expressed in brain, pancreas, stomach, the stomach cancer cell line AGS and the colon cancer cell line LoVo.

The protein resides in the cell membrane. Its function is as follows. Receptor for gastrin and cholecystokinin. The CCK-B receptors occur throughout the central nervous system where they modulate anxiety, analgesia, arousal, and neuroleptic activity. This receptor mediates its action by association with G proteins that activate a phosphatidylinositol-calcium second messenger system. Isoform 2 is constitutively activated and may regulate cancer cell proliferation via a gastrin-independent mechanism. In Homo sapiens (Human), this protein is Gastrin/cholecystokinin type B receptor.